A 339-amino-acid chain; its full sequence is N-acetyl-gamma-glutamyl-phosphate reductase (339 aa).

Residue cysteine 145 is part of the active site.

The protein belongs to the NAGSA dehydrogenase family. Type 1 subfamily.

It is found in the cytoplasm. The catalysed reaction is N-acetyl-L-glutamate 5-semialdehyde + phosphate + NADP(+) = N-acetyl-L-glutamyl 5-phosphate + NADPH + H(+). It participates in amino-acid biosynthesis; L-arginine biosynthesis; N(2)-acetyl-L-ornithine from L-glutamate: step 3/4. Its function is as follows. Catalyzes the NADPH-dependent reduction of N-acetyl-5-glutamyl phosphate to yield N-acetyl-L-glutamate 5-semialdehyde. This is N-acetyl-gamma-glutamyl-phosphate reductase from Thermotoga maritima (strain ATCC 43589 / DSM 3109 / JCM 10099 / NBRC 100826 / MSB8).